A 467-amino-acid polypeptide reads, in one-letter code: Xanthan biosynthesis protein XanB (467 aa).

Belongs to the mannose-6-phosphate isomerase type 2 family.

The enzyme catalyses D-mannose 6-phosphate = D-fructose 6-phosphate. It catalyses the reaction alpha-D-mannose 1-phosphate + GTP + H(+) = GDP-alpha-D-mannose + diphosphate. It participates in nucleotide-sugar biosynthesis; GDP-alpha-D-mannose biosynthesis; GDP-alpha-D-mannose from alpha-D-mannose 1-phosphate (GTP route): step 1/1. Its pathway is nucleotide-sugar biosynthesis; GDP-alpha-D-mannose biosynthesis; alpha-D-mannose 1-phosphate from D-fructose 6-phosphate: step 1/2. In terms of biological role, involved in xanthan production. The chain is Xanthan biosynthesis protein XanB (xanB) from Xanthomonas campestris pv. campestris (strain B100).